The following is a 505-amino-acid chain: ATP synthase subunit alpha, chloroplastic (505 aa).

Gly-170 to Thr-177 lines the ATP pocket.

The protein belongs to the ATPase alpha/beta chains family. As to quaternary structure, F-type ATPases have 2 components, CF(1) - the catalytic core - and CF(0) - the membrane proton channel. CF(1) has five subunits: alpha(3), beta(3), gamma(1), delta(1), epsilon(1). CF(0) has four main subunits: a, b, b' and c.

It localises to the plastid. The protein localises to the chloroplast thylakoid membrane. The catalysed reaction is ATP + H2O + 4 H(+)(in) = ADP + phosphate + 5 H(+)(out). Produces ATP from ADP in the presence of a proton gradient across the membrane. The alpha chain is a regulatory subunit. The protein is ATP synthase subunit alpha, chloroplastic of Zygnema circumcarinatum (Green alga).